Reading from the N-terminus, the 482-residue chain is Histone deacetylase 1 (482 aa).

The histone deacetylase stretch occupies residues 9–321 (RKVCYYYDGD…WTYETAVALD (313 aa)). Gly27 and Lys31 together coordinate 1D-myo-inositol 1,4,5,6-tetrakisphosphate. Residue Lys74 is modified to N6-acetyllysine; alternate. Lys74 participates in a covalent cross-link: Glycyl lysine isopeptide (Lys-Gly) (interchain with G-Cter in SUMO2); alternate. Residue His141 is part of the active site. Asp176 and His178 together coordinate Zn(2+). Lys220 is modified (N6-acetyllysine). Cys261 is modified (S-nitrosocysteine). A Zn(2+)-binding site is contributed by Asp264. Arg270 serves as a coordination point for 1D-myo-inositol 1,4,5,6-tetrakisphosphate. Position 273 is an S-nitrosocysteine (Cys273). A compositionally biased stretch (acidic residues) spans 390 to 400 (PEESGDEDEED). Positions 390–482 (PEESGDEDEE…KGVKEEVKLA (93 aa)) are disordered. Phosphoserine is present on residues Ser393, Ser406, Ser409, Ser421, and Ser423. Residues 401–416 (PDKRISICSSDKRIAC) are compositionally biased toward basic and acidic residues. Over residues 417 to 427 (EEEFSDSDEEG) the composition is skewed to acidic residues. Lys432 is modified (N6-methylated lysine; by EHMT2). Residue Lys438 forms a Glycyl lysine isopeptide (Lys-Gly) (interchain with G-Cter in SUMO2) linkage. Positions 443–482 (VKTEDEKEKDPEEKKEVTEEEKTKEEKQEAKGVKEEVKLA) are enriched in basic and acidic residues. Lys444 participates in a covalent cross-link: Glycyl lysine isopeptide (Lys-Gly) (interchain with G-Cter in SUMO2); alternate. A Glycyl lysine isopeptide (Lys-Gly) (interchain with G-Cter in SUMO); alternate cross-link involves residue Lys444. Glycyl lysine isopeptide (Lys-Gly) (interchain with G-Cter in SUMO2) cross-links involve residues Lys456, Lys457, and Lys473. Lys476 is covalently cross-linked (Glycyl lysine isopeptide (Lys-Gly) (interchain with G-Cter in SUMO2); alternate). Lys476 is covalently cross-linked (Glycyl lysine isopeptide (Lys-Gly) (interchain with G-Cter in SUMO); alternate). Lys480 is covalently cross-linked (Glycyl lysine isopeptide (Lys-Gly) (interchain with G-Cter in SUMO2)).

The protein belongs to the histone deacetylase family. HD type 1 subfamily. Part of the core histone deacetylase (HDAC) complex composed of HDAC1, HDAC2, RBBP4 and RBBP7, the core complex associates with SIN3, SAP18 and SAP30 to form the SIN3 HDAC complex. Component of the nucleosome remodeling and deacetylase (NuRD) repressor complex, composed of core proteins MTA1, MTA2, MTA3, RBBP4, RBBP7, HDAC1, HDAC2, MBD2, MBD3, and peripherally associated proteins CDK2AP1, CDK2AP2, GATAD2A, GATAD2B, CHD3, CHD4 and CHD5. The exact stoichiometry of the NuRD complex is unknown, and some subunits such as MBD2 and MBD3, GATAD2A and GATAD2B, and CHD3, CHD4 and CHD5 define mutually exclusive NuRD complexes. Component of a BHC histone deacetylase complex that contains HDAC1, HDAC2, HMG20B/BRAF35, KDM1A, RCOR1/CoREST and PHF21A/BHC80. The BHC complex may also contain ZMYM2, ZNF217, ZMYM3, GSE1 and GTF2I. Component of a mSin3A corepressor complex that contains SIN3A, SAP130, SUDS3/SAP45, ARID4B/SAP180, HDAC1 and HDAC2. Found in a trimeric complex with APBB1 and TSHZ3; the interaction between HDAC1 and APBB1 is mediated by TSHZ3. Forms a complex comprising APPL1, RUVBL2, APPL2, CTNNB1 and HDAC2. Component of a RCOR/GFI/KDM1A/HDAC complex. Part of a complex composed of TRIM28, HDAC1, HDAC2 and EHMT2. Part of a complex containing at least CDYL, MIER1, MIER2, HDAC1 and HDAC2. The large PER complex involved in the histone deacetylation is composed of at least HDAC1, PER2, SFPQ and SIN3A. Associates with the 9-1-1 complex; interacts with HUS1. Found in a complex with DNMT3A and HDAC7. Found in a complex with YY1, SIN3A and GON4L. Identified in a histone deacetylase complex that contains DNTTIP1, HDAC1 and MIDEAS; this complex assembles into a tetramer that contains four copies of each protein chain. Found in a complex composed of at least SINHCAF, SIN3A, HDAC1, SAP30, RBBP4, OGT and TET1. Component of the SIN3B complex, which includes SIN3B, HDAC1, PHF12 and MORF4L1. Interacts with GFI1; the interaction is direct. Interacts directly with GFI1B. Interacts with TSHZ3 (via N-terminus); the interaction is direct. Interacts with APEX1; the interaction is not dependent on the acetylated status of APEX1. Interacts with BANP. Interacts with BAZ2A/TIP5. Interacts with BCL6. Interacts with BCOR. Interacts with BHLHE40/DEC1. Interacts with BRCC3; this interaction is enhanced in the presence of PWWP2B. Interacts with BRMS1. Interacts with BRMS1L. Interacts with C10orf90/FATS (via its N-terminal); the interaction prevents binding of HDAC1 to CDKN1A/p21 and facilitates the acetylation and stabilization of CDKN1A/p21. Interacts with CBFA2T3. Interacts with CCAR2. Interacts with CDK2AP1. Interacts with CHD3. Interacts with CHD4. Interacts with CHFR. Interacts with CIART. Interacts with CDKN1A/p21. Interacts with CDK5 complexed to CDK5R1 (p25). Interacts with CRY1. Interacts with DAXX. Interacts with DDIT3/CHOP. Interacts with DDX5. Interacts with DHX36; this interaction occurs in a RNA-dependent manner. Interacts with DNMT1. Interacts with DNTTIP1. Interacts with E4F1. Interacts with EP300. Interacts with ERCC6. Interacts with GATAD2A. Interacts with HCFC1. Interacts with HDAC9. Interacts with HUS1. Interacts with INSM1. Interacts with KDM4A. Interacts with KDM5A; this interaction impairs histone deacetylation. Interacts with KDM5B. Interacts with KLF1. Interacts with MBD3L2. Interacts with MIER1. Interacts with NFE4. Interacts with NR4A2/NURR1. Interacts with NR1D2 (via C-terminus). Interacts with NRIP1. Interacts with NSD2. Interacts with PACS2. Interacts with PHB2. Interacts with PPHLN1. Interacts with PRDM6. Interacts with PRDM16. Interacts with PWWP2A in a MTA1-dependent manner. Interacts with PWWP2B. Interacts with RB1. Interacts with RERE. Interacts with SANBR (via the BTB domain). Interacts with SAMSN1. Interacts with SAP30L. Interacts with SETDB1. Interacts with SIN3A. Interacts with SMAD3. Interacts with SMAD4; positively regulated by ZBTB7A. Interacts with SMARCAD1. Interacts with SMARCA4/BRG1. Interacts with SMYD2. Interacts with SMYD4 (via MYND-type zinc finger). Interacts with SP1; the interaction deacetylates SP1 and regulates its transcriptional activity. Interacts with SP3; the interaction deacetylates SP3 and regulates its transcriptional activity. In vitro, C(18) ceramides increase this interaction and the subsequent SP3 deacetylation and SP3-mediated repression of the TERT promoter. Interacts with SPEN/MINT. Interacts with SPHK2. Interacts with SUV39H1. Interacts with TGIF. Interacts with TGIF2. Interacts with TRAF6. Interacts with TRIM28; the interaction recruits HDAC1 to E2F1 and inhibits its acetylation. Interacts with TSC22D3 isoform 1; this interaction affects HDAC1 activity on MYOG promoter and thus inhibits MYOD1 transcriptional activity. Interacts with UHRF1. Interacts with UHRF2. Interacts with ZBTB7A. Interacts with ZMYND8. Interacts with ZMYND15. Interacts with ZNF431. Interacts with ZNF516; this interaction is enhanced in the presence of PWWP2B. Interacts with ZNF541. Interacts with ZNF638. Interacts with ZNHIT1. Interacts with the non-histone region of MACROH2A1. Identified in a complex with HDAC2, KCTD19, DNTTIP1 and ZNF541. Interacts with MSX3. Interacts with VRK1. Zn(2+) serves as cofactor. Sumoylated on Lys-444 and Lys-476; which promotes enzymatic activity. Desumoylated by SENP1. In terms of processing, phosphorylation on Ser-421 and Ser-423 promotes enzymatic activity and interactions with NuRD and SIN3 complexes. Phosphorylated by CDK5. Post-translationally, ubiquitinated by CHFR and KCTD11, leading to its degradation by the proteasome.

The protein localises to the nucleus. The catalysed reaction is N(6)-acetyl-L-lysyl-[histone] + H2O = L-lysyl-[histone] + acetate. It catalyses the reaction N(6)-acetyl-L-lysyl-[protein] + H2O = L-lysyl-[protein] + acetate. The enzyme catalyses N(6)-(2E)-butenoyl-L-lysyl-[protein] + H2O = (2E)-2-butenoate + L-lysyl-[protein]. It carries out the reaction N(6)-[(S)-lactoyl]-L-lysyl-[protein] + H2O = (S)-lactate + L-lysyl-[protein]. Its activity is regulated as follows. Inositol tetraphosphate (1D-myo-inositol 1,4,5,6-tetrakisphosphate) may act as an intermolecular glue between HDAC1 and N-Cor repressor complex components. Functionally, histone deacetylase that catalyzes the deacetylation of lysine residues on the N-terminal part of the core histones (H2A, H2B, H3 and H4). Histone deacetylation gives a tag for epigenetic repression and plays an important role in transcriptional regulation, cell cycle progression and developmental events. Histone deacetylases act via the formation of large multiprotein complexes. Acts as a component of the histone deacetylase NuRD complex which participates in the remodeling of chromatin. As part of the SIN3B complex is recruited downstream of the constitutively active genes transcriptional start sites through interaction with histones and mitigates histone acetylation and RNA polymerase II progression within transcribed regions contributing to the regulation of transcription. Also functions as a deacetylase for non-histone targets, such as NR1D2, RELA, SP1, SP3, STAT3 and TSHZ3. Deacetylates SP proteins, SP1 and SP3, and regulates their function. Component of the BRG1-RB1-HDAC1 complex, which negatively regulates the CREST-mediated transcription in resting neurons. Upon calcium stimulation, HDAC1 is released from the complex and CREBBP is recruited, which facilitates transcriptional activation. Deacetylates TSHZ3 and regulates its transcriptional repressor activity. Deacetylates 'Lys-310' in RELA and thereby inhibits the transcriptional activity of NF-kappa-B. Deacetylates NR1D2 and abrogates the effect of KAT5-mediated relieving of NR1D2 transcription repression activity. Component of a RCOR/GFI/KDM1A/HDAC complex that suppresses, via histone deacetylase (HDAC) recruitment, a number of genes implicated in multilineage blood cell development. Involved in CIART-mediated transcriptional repression of the circadian transcriptional activator: CLOCK-BMAL1 heterodimer. Required for the transcriptional repression of circadian target genes, such as PER1, mediated by the large PER complex or CRY1 through histone deacetylation. In addition to protein deacetylase activity, also has protein-lysine deacylase activity: acts as a protein decrotonylase and delactylase by mediating decrotonylation ((2E)-butenoyl) and delactylation (lactoyl) of histones, respectively. This is Histone deacetylase 1 (HDAC1) from Bos taurus (Bovine).